A 404-amino-acid polypeptide reads, in one-letter code: Glycosylated lysosomal membrane protein B (404 aa).

The N-terminal stretch at 1 to 24 (MSCTRGWRLILLGLLCVGLLGTRG) is a signal peptide. Topologically, residues 25–364 (QDESRKVSVQ…YGDPPRDSFS (340 aa)) are lumenal. N-linked (GlcNAc...) asparagine glycans are attached at residues asparagine 85, asparagine 124, asparagine 128, asparagine 142, asparagine 152, asparagine 156, asparagine 163, asparagine 168, asparagine 178, asparagine 189, asparagine 205, asparagine 221, asparagine 266, asparagine 303, and asparagine 330. A helical membrane pass occupies residues 365–385 (ILVICIMAVALGTPLLLLIIG). Over 386-404 (TVLVTAVRHKVYPNYQPIN) the chain is Cytoplasmic. The Lysosomal targeting motif motif lies at 400–404 (YQPIN).

Belongs to the GLMP family. As to quaternary structure, interacts (via lumenal domain) with lysosomal protein MFSD1; the interaction starts while both proteins are still in the endoplasmic reticulum and is required for stabilization of MFSD1 in lysosomes but has no direct effect on its targeting to lysosomes or transporter activity.

Its subcellular location is the lysosome membrane. Its function is as follows. Required to protect lysosomal transporter MFSD1 from lysosomal proteolysis and for MFSD1 lysosomal localization. This Xenopus laevis (African clawed frog) protein is Glycosylated lysosomal membrane protein B (glmp-b).